The sequence spans 386 residues: Outer membrane protein assembly factor BamB (386 aa).

The signal sequence occupies residues 1-20 (MKKLFNQVLVAAGVLALLAG). Cys21 is lipidated: N-palmitoyl cysteine. The S-diacylglycerol cysteine moiety is linked to residue Cys21.

It belongs to the BamB family. Part of the Bam complex.

It localises to the cell outer membrane. Its function is as follows. Part of the outer membrane protein assembly complex, which is involved in assembly and insertion of beta-barrel proteins into the outer membrane. In Vibrio cholerae serotype O1 (strain ATCC 39315 / El Tor Inaba N16961), this protein is Outer membrane protein assembly factor BamB.